Consider the following 98-residue polypeptide: Serine protease inhibitor Kazal-type 14 (98 aa).

Residues 1–23 (MVKYFQVLWSLLFSIMLHSMLLA) form the signal peptide. A Kazal-like domain is found at 35–98 (GLIKIKCPYK…QIRYYHTGRC (64 aa)). Disulfide bonds link cysteine 41-cysteine 80, cysteine 58-cysteine 77, and cysteine 66-cysteine 98. A glycan (N-linked (GlcNAc...) asparagine) is linked at asparagine 52.

It is found in the secreted. May be a serine protease inhibitor. This chain is Serine protease inhibitor Kazal-type 14 (Spink14), found in Rattus norvegicus (Rat).